The sequence spans 339 residues: Probable E3 ubiquitin-protein ligase BAH1-like 1 (339 aa).

Residues 1–163 (MKFGAIYEEY…GSVSGRDFKS (163 aa)) form the SPX domain. An RING-type zinc finger spans residues 235–284 (CPICLDTLFNPYALSCGHLFCKGCACGAASVYIFQGVKSAPPEAKCPVCR).

The protein belongs to the RING-type zinc finger family.

The catalysed reaction is S-ubiquitinyl-[E2 ubiquitin-conjugating enzyme]-L-cysteine + [acceptor protein]-L-lysine = [E2 ubiquitin-conjugating enzyme]-L-cysteine + N(6)-ubiquitinyl-[acceptor protein]-L-lysine.. It functions in the pathway protein modification; protein ubiquitination. In Oryza sativa subsp. indica (Rice), this protein is Probable E3 ubiquitin-protein ligase BAH1-like 1.